We begin with the raw amino-acid sequence, 429 residues long: MANVVVVGSQWGDEGKGKIVDWLSERADVIVRYQGGHNAGHTLVIDGVSYKLSLLPSGLVRGKLSVIGNGVVVDPHHFVAEVEKLRGQGIDVTPDVLRVAENAPLILSIHRELDAMREGSNSGLKIGTTKRGIGPAYEDKVGRRAIRVIDLTEPETLRPKVERLLAHHNSLRRGMGLEEIAVETILTELTSVADQILPYIDQVWRVLDERRKAGARILFEGAQGALLDNDHGTYPFVTSSNTVAGQAAAGSGLGPTAIGYVLGITKAYTTRVGEGPFPTELNDEIGEFLGTKGHEFGVVTGRKRRCGWFDAVIVRQTVRTSGINGIALTKLDVLDGLEEIKICVAYKLDGKRIDYLPSSMGAQARVKPIYETLPGWSETTAGARSWNDLPAQAVKYVRHIEELIGAPVAMLSTSPEREDTILVTDPFHD.

Residues 12–18 (GDEGKGK) and 40–42 (GHT) contribute to the GTP site. D13 (proton acceptor) is an active-site residue. Residues D13 and G40 each coordinate Mg(2+). Residues 13-16 (DEGK), 38-41 (NAGH), T129, R143, Q223, T238, and R302 contribute to the IMP site. H41 functions as the Proton donor in the catalytic mechanism. A substrate-binding site is contributed by 298–304 (VVTGRKR). GTP is bound by residues R304, 330 to 332 (KLD), and 412 to 414 (STS).

This sequence belongs to the adenylosuccinate synthetase family. As to quaternary structure, homodimer. It depends on Mg(2+) as a cofactor.

It localises to the cytoplasm. It carries out the reaction IMP + L-aspartate + GTP = N(6)-(1,2-dicarboxyethyl)-AMP + GDP + phosphate + 2 H(+). Its pathway is purine metabolism; AMP biosynthesis via de novo pathway; AMP from IMP: step 1/2. Plays an important role in the de novo pathway of purine nucleotide biosynthesis. Catalyzes the first committed step in the biosynthesis of AMP from IMP. The polypeptide is Adenylosuccinate synthetase (Brucella ovis (strain ATCC 25840 / 63/290 / NCTC 10512)).